A 147-amino-acid chain; its full sequence is Ubiquitin-conjugating enzyme E2 4 (147 aa).

A UBC core domain is found at 1–147 (MSLKRINKEL…AKEWTKKYAV (147 aa)). Catalysis depends on Cys-85, which acts as the Glycyl thioester intermediate.

This sequence belongs to the ubiquitin-conjugating enzyme family.

The catalysed reaction is S-ubiquitinyl-[E1 ubiquitin-activating enzyme]-L-cysteine + [E2 ubiquitin-conjugating enzyme]-L-cysteine = [E1 ubiquitin-activating enzyme]-L-cysteine + S-ubiquitinyl-[E2 ubiquitin-conjugating enzyme]-L-cysteine.. It functions in the pathway protein modification; protein ubiquitination. In terms of biological role, E2 ubiquitin-conjugating enzyme that catalyzes the covalent attachment of ubiquitin to other proteins. Mediates the selective degradation of short-lived and abnormal proteins. Mediates ubiquitination of PEX5. This chain is Ubiquitin-conjugating enzyme E2 4 (UBC4), found in Candida albicans (Yeast).